Consider the following 427-residue polypeptide: Light-independent protochlorophyllide reductase subunit N (427 aa).

[4Fe-4S] cluster contacts are provided by Cys32, Cys57, and Cys118.

Belongs to the BchN/ChlN family. In terms of assembly, protochlorophyllide reductase is composed of three subunits; BchL, BchN and BchB. Forms a heterotetramer of two BchB and two BchN subunits. The cofactor is [4Fe-4S] cluster.

The catalysed reaction is chlorophyllide a + oxidized 2[4Fe-4S]-[ferredoxin] + 2 ADP + 2 phosphate = protochlorophyllide a + reduced 2[4Fe-4S]-[ferredoxin] + 2 ATP + 2 H2O. Its pathway is porphyrin-containing compound metabolism; bacteriochlorophyll biosynthesis (light-independent). Its function is as follows. Component of the dark-operative protochlorophyllide reductase (DPOR) that uses Mg-ATP and reduced ferredoxin to reduce ring D of protochlorophyllide (Pchlide) to form chlorophyllide a (Chlide). This reaction is light-independent. The NB-protein (BchN-BchB) is the catalytic component of the complex. In Rubrivivax gelatinosus (strain NBRC 100245 / IL144), this protein is Light-independent protochlorophyllide reductase subunit N.